The following is a 491-amino-acid chain: F-box protein At3g59000 (491 aa).

In terms of domain architecture, F-box spans 1–49 (MDRVGSLPDELLSHILSFLTTKEAALTSLLSKRWRYLIAFVPNLAFDDI).

In terms of assembly, part of a SCF (ASK-cullin-F-box) protein ligase complex. Interacts with ASK4.

It localises to the nucleus. Its pathway is protein modification; protein ubiquitination. Its function is as follows. Component of SCF(ASK-cullin-F-box) E3 ubiquitin ligase complexes, which may mediate the ubiquitination and subsequent proteasomal degradation of target proteins. The polypeptide is F-box protein At3g59000 (Arabidopsis thaliana (Mouse-ear cress)).